The sequence spans 401 residues: tRNA(Met) cytidine acetate ligase (401 aa).

Residues 7–20 (IVEYNPFHNGHLYH), Gly-102, Asn-164, and Arg-189 contribute to the ATP site.

Belongs to the TmcAL family.

Its subcellular location is the cytoplasm. It carries out the reaction cytidine(34) in elongator tRNA(Met) + acetate + ATP = N(4)-acetylcytidine(34) in elongator tRNA(Met) + AMP + diphosphate. Functionally, catalyzes the formation of N(4)-acetylcytidine (ac(4)C) at the wobble position of elongator tRNA(Met), using acetate and ATP as substrates. First activates an acetate ion to form acetyladenylate (Ac-AMP) and then transfers the acetyl group to tRNA to form ac(4)C34. This Thermoanaerobacter sp. (strain X514) protein is tRNA(Met) cytidine acetate ligase.